A 79-amino-acid polypeptide reads, in one-letter code: Tau-theraphotoxin-Hs1a (79 aa).

6 disulfide bridges follow: Cys2–Cys16, Cys9–Cys23, Cys15–Cys31, Cys44–Cys58, Cys51–Cys63, and Cys57–Cys71. 2 Domain repeats span residues 2–31 and 42–71; these read CAKE…IPHC and TNCA…IPYC. The segment at 2–71 is 2 X approximate repeats with cysteine pattern C-C-CC-C-C; the sequence is CAKEGEVCSW…DCPLAFIPYC (70 aa).

The protein belongs to the neurotoxin 23 family. Double-knot toxin subfamily. Interacts with TRPV1 (2 toxins (4 moieties) bind 1 channel (homotetramer)). Expressed by the venom gland.

It localises to the secreted. Its function is as follows. Selectively activates the heat-activated TRPV1 channel. It binds to TRPV1 in an open state-dependent manner, trapping it there to produce irreversible currents. It binds to the outer edge of the external pore of TRPV1 in a counterclockwise configuration, using a limited protein-protein interface and inserting hydrophobic residues into the bilayer. It also partitions naturally into membranes, with the two lobes exhibiting opposing energetics for membrane partitioning (K1) and channel activation (K2). In addition, the toxin disrupts a cluster of hydrophobic residues behind the selectivity filter that are critical for channel activation. The polypeptide is Tau-theraphotoxin-Hs1a (Cyriopagopus schmidti (Chinese bird spider)).